We begin with the raw amino-acid sequence, 336 residues long: Atypical chemokine receptor 1 (336 aa).

Residues 1 to 63 (MGNCLHQAEL…CSLLNDSSLP (63 aa)) lie on the Extracellular side of the membrane. Asn-16, Asn-27, Asn-33, and Asn-58 each carry an N-linked (GlcNAc...) asparagine glycan. Disulfide bonds link Cys-51–Cys-276 and Cys-129–Cys-195. Residues 64–84 (FFILASDLGILASSTVLFMLF) form a helical membrane-spanning segment. Residues 85 to 95 (RPLFRWQLCPG) are Cytoplasmic-facing. The helical transmembrane segment at 96 to 116 (WPVLAQLAVGSALFSIVVPIL) threads the bilayer. Residues 117–129 (APGLGNTHSSALC) are Extracellular-facing. Residues 130–153 (SLGYCVWYGSAFAQALLLGCHASL) form a helical membrane-spanning segment. The Cytoplasmic portion of the chain corresponds to 154-166 (GPKLGAGQVPGLT). Residues 167–187 (LGLPVGLWGATALLTLPITLA) form a helical membrane-spanning segment. Residues 188-207 (SGASDGLCTPIYSTELEALQ) are Extracellular-facing. The helical transmembrane segment at 208–228 (ATHAVACFAIFVLLPLGLFGA) threads the bilayer. Residues 229–244 (KGLKKALGMGPGPWMN) lie on the Cytoplasmic side of the membrane. The helical transmembrane segment at 245–265 (ILWVWFIFWWPHGLVLGLDFL) threads the bilayer. Residues 266 to 287 (VGSKLSLLPTCLAQQVLDLLLN) lie on the Extracellular side of the membrane. Residues 288 to 308 (LAEALAIVHCVATPLLLALFC) traverse the membrane as a helical segment. Topologically, residues 309 to 336 (HQTTRTLLPSLPLPERWSSPVDTLGSKS) are cytoplasmic.

It belongs to the G-protein coupled receptor 1 family. Atypical chemokine receptor subfamily.

The protein resides in the early endosome. Its subcellular location is the recycling endosome. It is found in the membrane. Atypical chemokine receptor that controls chemokine levels and localization via high-affinity chemokine binding that is uncoupled from classic ligand-driven signal transduction cascades, resulting instead in chemokine sequestration, degradation, or transcytosis. Also known as interceptor (internalizing receptor) or chemokine-scavenging receptor or chemokine decoy receptor. Has a promiscuous chemokine-binding profile, interacting with inflammatory chemokines of both the CXC and the CC subfamilies but not with homeostatic chemokines. Acts as a receptor for chemokines including CCL2, CCL5, CCL7, CCL11, CCL13, CCL14, CCL17, CXCL5, CXCL6, IL8/CXCL8, CXCL11, GRO, RANTES, MCP-1 and TARC. May regulate chemokine bioavailability and, consequently, leukocyte recruitment through two distinct mechanisms: when expressed in endothelial cells, it sustains the abluminal to luminal transcytosis of tissue-derived chemokines and their subsequent presentation to circulating leukocytes; when expressed in erythrocytes, serves as blood reservoir of cognate chemokines but also as a chemokine sink, buffering potential surges in plasma chemokine levels. The protein is Atypical chemokine receptor 1 (ACKR1) of Saimiri boliviensis boliviensis (Bolivian squirrel monkey).